Here is a 682-residue protein sequence, read N- to C-terminus: Zinc finger protein 16 (682 aa).

Positions 1-10 (MPSLRTRREE) are enriched in basic and acidic residues. The tract at residues 1–43 (MPSLRTRREEAEMELSVPGPSPWTPAAQARVRDAPAVTHPGSA) is disordered. The segment at 62–210 (YQQPDCDTRT…GVPTAESPLI (149 aa)) is necessary for transcription activation. The segment at 209–231 (LICNECGKTFQGNPDLIQRQIVH) adopts a C2H2-type 1; degenerate zinc-finger fold. The C2H2-type 2; degenerate zinc-finger motif lies at 237 to 259 (FMCDDCGKTFSQNSVLKNRHRSH). Lys-253 is covalently cross-linked (Glycyl lysine isopeptide (Lys-Gly) (interchain with G-Cter in SUMO2)). 8 C2H2-type zinc fingers span residues 265-287 (YQCS…QSHH), 293-315 (YMCN…QKSH), 321-343 (YECN…QRIH), 349-371 (YVCS…HRTH), 377-399 (FECG…QRVH), 405-427 (YECN…HRVH), 433-455 (YKCS…RRIH), and 461-483 (HVCN…QIIH). 2 required for nuclear localization regions span residues 268 to 393 (SECG…AHLR) and 341 to 373 (RIHS…THTG). Residues 473 to 503 (SSVLRKHQIIHTGEKPYRCSVCGKAFSHSSA) are required for nuclear localization. Lys-487 carries the N6-acetyllysine modification. 7 consecutive C2H2-type zinc fingers follow at residues 489–511 (YRCS…QGVH), 517–539 (YACH…QRVH), 545–567 (YECT…QRIH), 573–595 (HECN…QKVH), 601–623 (YTCV…QIIH), 629–651 (YKCS…QRIH), and 657–679 (YDCA…QLIH).

Belongs to the krueppel C2H2-type zinc-finger protein family. In terms of assembly, interacts with INCA1; the interaction inhibits INCA1 activity and induces the cell cycle process. Ubiquitous.

It is found in the nucleus. In terms of biological role, acts as a transcriptional activator. Promotes cell proliferation by facilitating the cell cycle phase transition from the S to G2/M phase. Involved in both the hemin- and phorbol myristate acetate (PMA)-induced erythroid and megakaryocytic differentiation, respectively. Also plays a role as an inhibitor of cell apoptosis. The protein is Zinc finger protein 16 (ZNF16) of Homo sapiens (Human).